The chain runs to 446 residues: tRNA-2-methylthio-N(6)-dimethylallyladenosine synthase (446 aa).

Positions 3–124 (KKLYIKTYGC…LPELISKVVR (122 aa)) constitute an MTTase N-terminal domain. [4Fe-4S] cluster is bound by residues Cys-12, Cys-48, Cys-87, Cys-162, Cys-166, and Cys-169. Residues 148–380 (YPQGASAFIS…QKELSSQQLA (233 aa)) enclose the Radical SAM core domain. Residues 383–446 (ESCVGSTMKV…SNSLTGEIYT (64 aa)) enclose the TRAM domain.

Belongs to the methylthiotransferase family. MiaB subfamily. As to quaternary structure, monomer. [4Fe-4S] cluster serves as cofactor.

It is found in the cytoplasm. It carries out the reaction N(6)-dimethylallyladenosine(37) in tRNA + (sulfur carrier)-SH + AH2 + 2 S-adenosyl-L-methionine = 2-methylsulfanyl-N(6)-dimethylallyladenosine(37) in tRNA + (sulfur carrier)-H + 5'-deoxyadenosine + L-methionine + A + S-adenosyl-L-homocysteine + 2 H(+). Functionally, catalyzes the methylthiolation of N6-(dimethylallyl)adenosine (i(6)A), leading to the formation of 2-methylthio-N6-(dimethylallyl)adenosine (ms(2)i(6)A) at position 37 in tRNAs that read codons beginning with uridine. The sequence is that of tRNA-2-methylthio-N(6)-dimethylallyladenosine synthase from Rickettsia canadensis (strain McKiel).